Reading from the N-terminus, the 447-residue chain is MSRKYFGTDGIRGRVGESPITPDFVLRLGYAAGRVLAHGGEAHGHGRPTVLIGKDTRLSGYMLEAALEAGFTAAGVDVLMSGPLPTPGVAYLTRALRLSAGVVISASHNPYYDNGIKFFSATGDKLPDETELQIEAELEKPMAYAASDALGRARRIEDAAGRYIEFCKSTFPSDLNLFGMKVVLDSAHGAAYHIAPHVFHELGADVVSIGNQPNGRNINDGYGATAPGKLVEATREHGADIGLAFDGDADRLQVVDRNGRLYNGDELLYVMVQARRAAGQTVPGAVGTLMTNLAVELALKAQGVEFVRAKVGDRYVLEELKKNGWLLGGEGSGHLLCLDKHSTGDGIISALQVLAALRRSGQTLDEMLDGVRLFPQKLINVRVEKGFDWKSHAGLQAALKTSEAELDGKGRVLIRPSGTEPVVRVMVEAQDAELANQHAERLAATLQ.

The Phosphoserine intermediate role is filled by S107. Mg(2+) is bound by residues S107, D246, D248, and D250. S107 is modified (phosphoserine).

This sequence belongs to the phosphohexose mutase family. The cofactor is Mg(2+). Activated by phosphorylation.

The enzyme catalyses alpha-D-glucosamine 1-phosphate = D-glucosamine 6-phosphate. In terms of biological role, catalyzes the conversion of glucosamine-6-phosphate to glucosamine-1-phosphate. The sequence is that of Phosphoglucosamine mutase from Ralstonia pickettii (strain 12J).